A 611-amino-acid chain; its full sequence is Elongation factor 4 (611 aa).

In terms of domain architecture, tr-type G spans 11–193 (KHIRNFSIVA…KIVKDVPAPT (183 aa)). GTP is bound by residues 23-28 (DHGKST) and 140-143 (NKID).

Belongs to the TRAFAC class translation factor GTPase superfamily. Classic translation factor GTPase family. LepA subfamily.

Its subcellular location is the cell membrane. The enzyme catalyses GTP + H2O = GDP + phosphate + H(+). In terms of biological role, required for accurate and efficient protein synthesis under certain stress conditions. May act as a fidelity factor of the translation reaction, by catalyzing a one-codon backward translocation of tRNAs on improperly translocated ribosomes. Back-translocation proceeds from a post-translocation (POST) complex to a pre-translocation (PRE) complex, thus giving elongation factor G a second chance to translocate the tRNAs correctly. Binds to ribosomes in a GTP-dependent manner. The sequence is that of Elongation factor 4 from Limosilactobacillus reuteri (strain DSM 20016) (Lactobacillus reuteri).